Consider the following 421-residue polypeptide: Cytochrome c biogenesis protein Ccs1 (421 aa).

3 consecutive transmembrane segments (helical) span residues 12-32, 71-91, and 157-177; these read LRFA…GTVI, TWWF…CTIL, and IAPI…IFGA.

This sequence belongs to the Ccs1/CcsB family. In terms of assembly, may interact with CcsA.

It localises to the plastid. Its subcellular location is the chloroplast thylakoid membrane. Its function is as follows. Required during biogenesis of c-type cytochromes (cytochrome c6 and cytochrome f) at the step of heme attachment. This Trieres chinensis (Marine centric diatom) protein is Cytochrome c biogenesis protein Ccs1.